Here is a 211-residue protein sequence, read N- to C-terminus: MSVTLHTTHGDLKVELFCEAVPKTAENFIALCAAGAYNDTPFHRLIPGFMIQGGDISLGPAANSQGTTPMLPFDDIPKGGTSIYHPSALNQEIHLPALRHNTRGILSMASRPVKNQTAPGSQGATGPTINGSQFFITFAAAPHLDGSSTVFGKVLNLTAEDEGGDVLSKLEKANVKTDKKGKVVQPKENEETEYETLRINRVTIHANPFAT.

The PPIase cyclophilin-type domain occupies 1-204 (MSVTLHTTHG…ETLRINRVTI (204 aa)).

Belongs to the cyclophilin-type PPIase family. PPIL3 subfamily.

The enzyme catalyses [protein]-peptidylproline (omega=180) = [protein]-peptidylproline (omega=0). Functionally, PPIases accelerate the folding of proteins. It catalyzes the cis-trans isomerization of proline imidic peptide bonds in oligopeptides. This Emericella nidulans (strain FGSC A4 / ATCC 38163 / CBS 112.46 / NRRL 194 / M139) (Aspergillus nidulans) protein is Peptidyl-prolyl cis-trans isomerase-like 3 (cyp10).